The chain runs to 330 residues: MGTFTLHQGQSNLIKSFFRNYYLNAELGLPNDMELREFALQPFGSDTYIRHLSFSSSEELRDYLVNRNLPLHLFYSSARYQLPSARDMEEKAWMGSDLLFDIDADHICKLRSIRFCPVCGNAITSEKCERDNVETLEYVEMTSECIKRGLEEARNLVEILEDDFGLKPKVYFSGNRGFHVQVDCYGDCALLDSDERKEIAEYVMGVGVPSYPGGSESAPGWVGRKNRGINGVTIDGQVTIDVKRLIRIPNSLHGKSGLIVKEVTNLDDFEFNEALSPFTGYTIFLPYISIETEVLSRNIKLNRGVPIKIESSIGIYLHLKNLGEVKAYVR.

Catalysis depends on residues Asp-101 and Asp-103. Zn(2+)-binding residues include Cys-116, Cys-119, Cys-128, and Asp-131. Asp-235 is a catalytic residue.

It belongs to the eukaryotic-type primase small subunit family. Heterodimer of a small subunit (PriS) and a large subunit (PriL). Mg(2+) serves as cofactor. Requires Mn(2+) as cofactor.

Functionally, catalytic subunit of DNA primase, an RNA polymerase that catalyzes the synthesis of short RNA molecules used as primers for DNA polymerase during DNA replication. The small subunit contains the primase catalytic core and has DNA synthesis activity on its own. Binding to the large subunit stabilizes and modulates the activity, increasing the rate of DNA synthesis while decreasing the length of the DNA fragments, and conferring RNA synthesis capability. The DNA polymerase activity may enable DNA primase to also catalyze primer extension after primer synthesis. May also play a role in DNA repair. The polypeptide is DNA primase small subunit PriS (Saccharolobus islandicus (strain Y.N.15.51 / Yellowstone #2) (Sulfolobus islandicus)).